Consider the following 246-residue polypeptide: Type III pantothenate kinase (246 aa).

Residue 6–13 (DVGNTHSV) participates in ATP binding. Residue 103–106 (GADR) participates in substrate binding. The active-site Proton acceptor is Asp-105. Asp-125 is a binding site for K(+). Thr-128 is a binding site for ATP. Thr-179 is a substrate binding site.

Belongs to the type III pantothenate kinase family. Homodimer. Requires NH4(+) as cofactor. K(+) is required as a cofactor.

Its subcellular location is the cytoplasm. It carries out the reaction (R)-pantothenate + ATP = (R)-4'-phosphopantothenate + ADP + H(+). Its pathway is cofactor biosynthesis; coenzyme A biosynthesis; CoA from (R)-pantothenate: step 1/5. Functionally, catalyzes the phosphorylation of pantothenate (Pan), the first step in CoA biosynthesis. In Thermotoga sp. (strain RQ2), this protein is Type III pantothenate kinase.